Consider the following 423-residue polypeptide: D-tagatose-1,6-bisphosphate aldolase subunit GatZ (423 aa).

This sequence belongs to the GatZ/KbaZ family. GatZ subfamily. Forms a complex with GatY.

The protein operates within carbohydrate metabolism; D-tagatose 6-phosphate degradation; D-glyceraldehyde 3-phosphate and glycerone phosphate from D-tagatose 6-phosphate: step 2/2. Functionally, component of the tagatose-1,6-bisphosphate aldolase GatYZ that is required for full activity and stability of the Y subunit. Could have a chaperone-like function for the proper and stable folding of GatY. When expressed alone, GatZ does not show any aldolase activity. Is involved in the catabolism of galactitol. The sequence is that of D-tagatose-1,6-bisphosphate aldolase subunit GatZ from Salmonella heidelberg (strain SL476).